The following is a 78-amino-acid chain: Large ribosomal subunit protein bL28 (78 aa).

The disordered stretch occupies residues 1 to 21; the sequence is MSRVCQLSGKRANNGMAVSHS.

This sequence belongs to the bacterial ribosomal protein bL28 family.

The sequence is that of Large ribosomal subunit protein bL28 from Synechococcus sp. (strain RCC307).